The primary structure comprises 423 residues: Probable sodium/metabolite cotransporter BASS4, chloroplastic (423 aa).

The N-terminal 55 residues, 1 to 55 (MVTTHHLCLLRSTVLSVPVRLRAPRAPPHPRLPTASASASSYHGPTHLRRLRPLR), are a transit peptide targeting the chloroplast. The segment at 23–45 (APRAPPHPRLPTASASASSYHGP) is disordered. Helical transmembrane passes span 96 to 116 (FLPL…TLGC), 123 to 140 (LSKY…LTLR), 153 to 173 (AGLF…QFIM), 182 to 202 (FITG…GVTL), 212 to 232 (LALA…PLSL), 244 to 264 (LPTE…IILG), 284 to 301 (GFSV…WIQV), 315 to 335 (AFAV…AFNA), and 389 to 409 (LLVI…SIIV).

It belongs to the bile acid:sodium symporter (BASS) (TC 2.A.28) family.

Its subcellular location is the membrane. The protein localises to the plastid. The protein resides in the chloroplast envelope. Its function is as follows. May function as sodium-coupled metabolite transporter across the chloroplast envelope. The chain is Probable sodium/metabolite cotransporter BASS4, chloroplastic (BASS4) from Oryza sativa subsp. indica (Rice).